Reading from the N-terminus, the 358-residue chain is Peptide chain release factor 1 (358 aa).

At Gln233 the chain carries N5-methylglutamine.

It belongs to the prokaryotic/mitochondrial release factor family. Post-translationally, methylated by PrmC. Methylation increases the termination efficiency of RF1.

Its subcellular location is the cytoplasm. Peptide chain release factor 1 directs the termination of translation in response to the peptide chain termination codons UAG and UAA. The chain is Peptide chain release factor 1 from Geobacillus kaustophilus (strain HTA426).